The primary structure comprises 209 residues: MSKVYVFDHPLIQHKLTYIRDKSTGTKEFRELVDEVAALMAFEITRDLPLQEVTVETPVGPATSKKIAGKKLGLVPILRAGLGMVDGILRMIPAAKVGHVGLYRDPETLQPVEYYVKLPTDVEERELIVIDPMLATGGSAVEAINCLKKRGATSIKLMCLIAAPEGVEVVKEAHPDVDIYLAALDEKLNEKGYIVPGLGDAGDRLFGTK.

Residues Arg-79, Arg-104, and Asp-131–Ser-139 contribute to the 5-phospho-alpha-D-ribose 1-diphosphate site. Uracil-binding positions include Ile-194 and Gly-199–Ala-201. Asp-200 provides a ligand contact to 5-phospho-alpha-D-ribose 1-diphosphate.

The protein belongs to the UPRTase family. Mg(2+) serves as cofactor.

It carries out the reaction UMP + diphosphate = 5-phospho-alpha-D-ribose 1-diphosphate + uracil. The protein operates within pyrimidine metabolism; UMP biosynthesis via salvage pathway; UMP from uracil: step 1/1. With respect to regulation, allosterically activated by GTP. Its function is as follows. Catalyzes the conversion of uracil and 5-phospho-alpha-D-ribose 1-diphosphate (PRPP) to UMP and diphosphate. The polypeptide is Uracil phosphoribosyltransferase (Halalkalibacterium halodurans (strain ATCC BAA-125 / DSM 18197 / FERM 7344 / JCM 9153 / C-125) (Bacillus halodurans)).